The sequence spans 351 residues: Probable RNA methyltransferase BAV1540 (351 aa).

Glutamate 90 functions as the Proton acceptor in the catalytic mechanism. The 227-residue stretch at 93 to 319 folds into the Radical SAM core domain; sequence LLPRDGLCVS…VKVRNSAGQD (227 aa). A disulfide bridge connects residues cysteine 100 and cysteine 324. Residues cysteine 107, cysteine 111, and cysteine 114 each contribute to the [4Fe-4S] cluster site. S-adenosyl-L-methionine-binding positions include 152-153, serine 182, 205-207, and asparagine 281; these read GE and SLH. The active-site S-methylcysteine intermediate is the cysteine 324.

Belongs to the radical SAM superfamily. RlmN family. The cofactor is [4Fe-4S] cluster.

The protein resides in the cytoplasm. The chain is Probable RNA methyltransferase BAV1540 from Bordetella avium (strain 197N).